Consider the following 224-residue polypeptide: Cytidylate kinase (224 aa).

Residue Gly11–Thr19 coordinates ATP.

It belongs to the cytidylate kinase family. Type 1 subfamily.

The protein localises to the cytoplasm. It carries out the reaction CMP + ATP = CDP + ADP. It catalyses the reaction dCMP + ATP = dCDP + ADP. The polypeptide is Cytidylate kinase (Listeria innocua serovar 6a (strain ATCC BAA-680 / CLIP 11262)).